Here is a 403-residue protein sequence, read N- to C-terminus: Soluble calcium-activated nucleotidase 1 (403 aa).

Residues 1 to 44 (MPIQPFDQREWNEPMHSLRISVGGLPVLASMTKATDPRFRPRWR) are Cytoplasmic-facing. Residues 45-61 (VILTSFVGAALLWLLYS) traverse the membrane as a helical; Signal-anchor for type II membrane protein segment. Residues 62-403 (HHQGPVPGRP…TVKYEGIEFI (342 aa)) lie on the Lumenal side of the membrane. Residue Asn-90 is glycosylated (N-linked (GlcNAc...) asparagine). The Ca(2+) site is built by Ser-170, Asp-171, Glu-217, Glu-286, Ser-347, and Glu-398.

The protein belongs to the apyrase family. In terms of assembly, monomer. Homodimer; dimerization is Ca(2+)-dependent. Ca(2+) is required as a cofactor.

Its subcellular location is the endoplasmic reticulum membrane. The protein resides in the golgi apparatus. The protein localises to the golgi stack membrane. The enzyme catalyses a ribonucleoside 5'-diphosphate + H2O = a ribonucleoside 5'-phosphate + phosphate + H(+). Functionally, calcium-dependent nucleotidase with a preference for UDP. The order of activity with different substrates is UDP &gt; GDP &gt; IDP &gt;&gt; UTP &gt; CDP = GTP = ITP. Has very low activity towards ADP and even lower activity towards ATP. Does not hydrolyze AMP and GMP. Involved in proteoglycan synthesis. The chain is Soluble calcium-activated nucleotidase 1 (Cant1) from Mus musculus (Mouse).